A 203-amino-acid chain; its full sequence is NADH-quinone oxidoreductase subunit C (203 aa).

It belongs to the complex I 30 kDa subunit family. NDH-1 is composed of 14 different subunits. Subunits NuoB, C, D, E, F, and G constitute the peripheral sector of the complex.

It localises to the cell inner membrane. It carries out the reaction a quinone + NADH + 5 H(+)(in) = a quinol + NAD(+) + 4 H(+)(out). In terms of biological role, NDH-1 shuttles electrons from NADH, via FMN and iron-sulfur (Fe-S) centers, to quinones in the respiratory chain. The immediate electron acceptor for the enzyme in this species is believed to be ubiquinone. Couples the redox reaction to proton translocation (for every two electrons transferred, four hydrogen ions are translocated across the cytoplasmic membrane), and thus conserves the redox energy in a proton gradient. This Delftia acidovorans (strain DSM 14801 / SPH-1) protein is NADH-quinone oxidoreductase subunit C.